The following is a 345-amino-acid chain: Methionine import ATP-binding protein MetN 2 (345 aa).

The region spanning 4–243 (IELRHVKKEF…PQTEIAKRFI (240 aa)) is the ABC transporter domain. 40 to 47 (GYSGAGKS) provides a ligand contact to ATP.

This sequence belongs to the ABC transporter superfamily. Methionine importer (TC 3.A.1.24) family. In terms of assembly, the complex is composed of two ATP-binding proteins (MetN), two transmembrane proteins (MetI) and a solute-binding protein (MetQ).

The protein localises to the cell membrane. It catalyses the reaction L-methionine(out) + ATP + H2O = L-methionine(in) + ADP + phosphate + H(+). It carries out the reaction D-methionine(out) + ATP + H2O = D-methionine(in) + ADP + phosphate + H(+). Functionally, part of the ABC transporter complex MetNIQ involved in methionine import. Responsible for energy coupling to the transport system. The chain is Methionine import ATP-binding protein MetN 2 from Enterococcus faecalis (strain ATCC 700802 / V583).